The chain runs to 314 residues: Methenyltetrahydromethanopterin cyclohydrolase (314 aa).

The protein belongs to the MCH family.

Its subcellular location is the cytoplasm. The enzyme catalyses 5,10-methenyl-5,6,7,8-tetrahydromethanopterin + H2O = N(5)-formyl-5,6,7,8-tetrahydromethanopterin + H(+). It participates in one-carbon metabolism; methanogenesis from CO(2); 5,10-methenyl-5,6,7,8-tetrahydromethanopterin from CO(2): step 3/3. Its function is as follows. Catalyzes the reversible interconversion of 5-formyl-H(4)MPT to methenyl-H(4)MPT(+). This chain is Methenyltetrahydromethanopterin cyclohydrolase, found in Methanoregula boonei (strain DSM 21154 / JCM 14090 / 6A8).